The sequence spans 276 residues: NADH-cytochrome b5 reductase 2 (276 aa).

One can recognise an FAD-binding FR-type domain in the interval 15-127; sequence EAKYPLPLIE…RGPRGRLFYH (113 aa). N6-acetyllysine is present on K17. Y18 bears the Phosphotyrosine mark. Residues 107-137 and 146-181 contribute to the FAD site; these read ENMKIGETIFFRGPRGRLFYHGPGNLGIRPD and LADHLGMIAGGTGITPMLQLIRHITKDPSDRTRMSL.

Belongs to the flavoprotein pyridine nucleotide cytochrome reductase family. Requires FAD as cofactor. As to expression, restricted expression.

The enzyme catalyses 2 Fe(III)-[cytochrome b5] + NADH = 2 Fe(II)-[cytochrome b5] + NAD(+) + H(+). In terms of biological role, NADH-cytochrome b5 reductases are involved in desaturation and elongation of fatty acids, cholesterol biosynthesis, drug metabolism, and, in erythrocyte, methemoglobin reduction. Responsible for NADH-dependent lucigenin chemiluminescence in spermatozoa by reducing both lucigenin and 2-[4-iodophenyl]-3-[4-nitrophenyl]-5-[2,4-disulfophenyl]-2H tetrazolium monosodium salt (WST-1). This chain is NADH-cytochrome b5 reductase 2, found in Homo sapiens (Human).